Reading from the N-terminus, the 451-residue chain is D-inositol 3-phosphate glycosyltransferase (451 aa).

Residue histidine 21 coordinates 1D-myo-inositol 3-phosphate. Residues 27–28 (QP) and glycine 35 each bind UDP-N-acetyl-alpha-D-glucosamine. 1D-myo-inositol 3-phosphate contacts are provided by residues 32–37 (DAGGMN), lysine 90, tyrosine 123, threonine 147, and arginine 167. UDP-N-acetyl-alpha-D-glucosamine contacts are provided by arginine 241, lysine 246, and glutamine 305. Positions 314, 315, and 317 each coordinate Mg(2+). UDP-N-acetyl-alpha-D-glucosamine-binding residues include glutamate 327 and glutamate 335. Threonine 341 serves as a coordination point for Mg(2+).

It belongs to the glycosyltransferase group 1 family. MshA subfamily. As to quaternary structure, homodimer.

The catalysed reaction is 1D-myo-inositol 3-phosphate + UDP-N-acetyl-alpha-D-glucosamine = 1D-myo-inositol 2-acetamido-2-deoxy-alpha-D-glucopyranoside 3-phosphate + UDP + H(+). Catalyzes the transfer of a N-acetyl-glucosamine moiety to 1D-myo-inositol 3-phosphate to produce 1D-myo-inositol 2-acetamido-2-deoxy-glucopyranoside 3-phosphate in the mycothiol biosynthesis pathway. In Nocardia farcinica (strain IFM 10152), this protein is D-inositol 3-phosphate glycosyltransferase.